Reading from the N-terminus, the 30-residue chain is Arsenate respiratory reductase iron-sulfur subunit ArrB (30 aa).

4 residues coordinate [4Fe-4S] cluster: Cys-12, Cys-15, Cys-18, and Cys-22.

In terms of assembly, heterodimer composed of one large subunit (ArrA) and one small subunit (ArrB). It depends on [4Fe-4S] cluster as a cofactor.

The protein resides in the periplasm. In terms of biological role, component of the arsenate respiratory reductase (Arr) complex, which catalyzes the reduction of arsenate (As(V)) to arsenite (As(III)). ArrB is probably the electron transfer subunit. In Chrysiogenes arsenatis, this protein is Arsenate respiratory reductase iron-sulfur subunit ArrB.